The sequence spans 1832 residues: Putative transcription factor capicua (1832 aa).

Residues Ser41 and Ser49 each carry the phosphoserine modification. Disordered stretches follow at residues 66 to 121 (ANQS…EVGS), 135 to 227 (STVG…AHPH), 323 to 353 (QQQQ…NHNN), 389 to 427 (NQRQ…AAMR), 444 to 493 (DGAA…IRRP), 563 to 619 (DRRK…GGQG), 690 to 739 (RERV…SGGE), 784 to 845 (QPTG…VSAP), 874 to 938 (PMHH…EDDE), 1069 to 1105 (TSTL…TISC), 1151 to 1178 (GQDE…EQVT), 1457 to 1602 (DGGM…STAA), 1632 to 1668 (QPED…VQKL), 1701 to 1733 (LESS…HRKV), and 1789 to 1817 (ASCT…SSTS). The segment covering 96-121 (NANNNSSNNNTSSSNNNNNSNWEVGS) has biased composition (low complexity). Positions 172-186 (PPPPPPASLPAPSAP) are enriched in pro residues. Composition is skewed to low complexity over residues 187-203 (PTSG…HATS), 211-223 (QQQH…HQQQ), and 323-342 (QQQQ…QQQQ). Residues 397–408 (EEPDDQLDDDVF) are compositionally biased toward acidic residues. The segment covering 409–422 (ETTTPGISANSKKQ) has biased composition (polar residues). The span at 446 to 484 (AAGAPATSAAKRRSQSLSALQQQQQQQQQAGAAGTAAGQ) shows a compositional bias: low complexity. The HMG box DNA-binding region spans 490–558 (IRRPMNAFMI…AHFKLHPEWK (69 aa)). Residues 610-619 (GGSGSCGGQG) are compositionally biased toward gly residues. The segment at 834–1832 (GSASGGGVVS…TSAADVFQYY (999 aa)) is interaction with gro. Basic and acidic residues predominate over residues 903 to 914 (ESSEKDKPALDD). The segment covering 915–938 (QERDEVEEEDEDEEDDDEDDEDDE) has biased composition (acidic residues). Polar residues predominate over residues 1078-1091 (NPANNEAPNKFSNF). The span at 1092 to 1105 (PTQHQPTTTTTISC) shows a compositional bias: low complexity. Residues 1462–1471 (GCASAAASGG) show a composition bias toward low complexity. The span at 1503–1525 (LSQSKSESNVSFGANLGASNGQH) shows a compositional bias: polar residues. Over residues 1547–1589 (NSSNLSSALPTPTSSTTTPNSDEQLPLTPTTSSSNSNLNQQQP) the composition is skewed to low complexity. Position 1716 is a phosphothreonine (Thr1716). The span at 1724–1733 (DASEKGHRKV) shows a compositional bias: basic and acidic residues. Over residues 1789 to 1799 (ASCTPHSAGPN) the composition is skewed to polar residues. Residues 1800 to 1817 (TPSDSNSSSTTLSASSTS) show a composition bias toward low complexity.

Interacts with gro. As to expression, expressed in the central region of embryos. Also expressed in ovarian follicle cells, the wing imaginal disks and the wing pouch.

Its subcellular location is the nucleus. In terms of biological role, transcriptional repressor required for the specification of numerous cell types during embryonic development. Required for terminal patterning of early embryos. May associate with gro to repress tll and hkb, restricting their expression to embryonic terminal poles where they initiate correct development of head and tail structures. Required for dorsoventral patterning of oocytes and early embryos. Cooperates with dl to repress zen and other dorsal specific genes within the embryo and promotes expression of the ventralizing factor pip in ovarian follicle cells. Required during wing development for the specification of intervein areas, where it mediates localized repression of vein specific genes such as aos, dpp and vvl. The chain is Putative transcription factor capicua (cic) from Drosophila melanogaster (Fruit fly).